We begin with the raw amino-acid sequence, 827 residues long: Glycerol-3-phosphate acyltransferase (827 aa).

The HXXXXD motif signature appears at 325 to 330 (CHRSHM).

It belongs to the GPAT/DAPAT family.

It is found in the cell inner membrane. It catalyses the reaction sn-glycerol 3-phosphate + an acyl-CoA = a 1-acyl-sn-glycero-3-phosphate + CoA. It functions in the pathway phospholipid metabolism; CDP-diacylglycerol biosynthesis; CDP-diacylglycerol from sn-glycerol 3-phosphate: step 1/3. In Shigella sonnei (strain Ss046), this protein is Glycerol-3-phosphate acyltransferase.